We begin with the raw amino-acid sequence, 331 residues long: NADH-quinone oxidoreductase subunit H (331 aa).

Transmembrane regions (helical) follow at residues 7-27, 81-101, 114-134, 154-174, 187-207, 238-258, 271-291, and 310-330; these read ALVT…AVVI, MIFT…FAIV, IGIL…LFAG, ISYE…VGSF, VWFI…GVAV, FFVG…TLFF, WLSF…FILI, and VCLP…LAAA.

This sequence belongs to the complex I subunit 1 family. In terms of assembly, NDH-1 is composed of 13 different subunits. Subunits NuoA, H, J, K, L, M, N constitute the membrane sector of the complex.

Its subcellular location is the cell inner membrane. It carries out the reaction a quinone + NADH + 5 H(+)(in) = a quinol + NAD(+) + 4 H(+)(out). Its function is as follows. NDH-1 shuttles electrons from NADH, via FMN and iron-sulfur (Fe-S) centers, to quinones in the respiratory chain. The immediate electron acceptor for the enzyme in this species is believed to be ubiquinone. Couples the redox reaction to proton translocation (for every two electrons transferred, four hydrogen ions are translocated across the cytoplasmic membrane), and thus conserves the redox energy in a proton gradient. This subunit may bind ubiquinone. This is NADH-quinone oxidoreductase subunit H from Pseudomonas paraeruginosa (strain DSM 24068 / PA7) (Pseudomonas aeruginosa (strain PA7)).